A 513-amino-acid polypeptide reads, in one-letter code: Mannosyl-oligosaccharide alpha-1,2-mannosidase 1B (513 aa).

The signal sequence occupies residues 1–21 (MHLPSLSLSLTALAIASPSAA). N-linked (GlcNAc...) asparagine glycans are attached at residues Asn-97, Asn-117, Asn-150, Asn-184, Asn-251, Asn-322, Asn-348, and Asn-368. Cysteines 334 and 363 form a disulfide. Glu-377 (proton donor) is an active-site residue. Thr-503 contributes to the Ca(2+) binding site.

The protein belongs to the glycosyl hydrolase 47 family. In terms of assembly, monomer. Requires Ca(2+) as cofactor. The cofactor is Mg(2+).

It localises to the cytoplasmic vesicle lumen. The enzyme catalyses N(4)-(alpha-D-Man-(1-&gt;2)-alpha-D-Man-(1-&gt;2)-alpha-D-Man-(1-&gt;3)-[alpha-D-Man-(1-&gt;2)-alpha-D-Man-(1-&gt;3)-[alpha-D-Man-(1-&gt;2)-alpha-D-Man-(1-&gt;6)]-alpha-D-Man-(1-&gt;6)]-beta-D-Man-(1-&gt;4)-beta-D-GlcNAc-(1-&gt;4)-beta-D-GlcNAc)-L-asparaginyl-[protein] (N-glucan mannose isomer 9A1,2,3B1,2,3) + 4 H2O = N(4)-(alpha-D-Man-(1-&gt;3)-[alpha-D-Man-(1-&gt;3)-[alpha-D-Man-(1-&gt;6)]-alpha-D-Man-(1-&gt;6)]-beta-D-Man-(1-&gt;4)-beta-D-GlcNAc-(1-&gt;4)-beta-D-GlcNAc)-L-asparaginyl-[protein] (N-glucan mannose isomer 5A1,2) + 4 beta-D-mannose. It catalyses the reaction N(4)-(alpha-D-Man-(1-&gt;2)-alpha-D-Man-(1-&gt;2)-alpha-D-Man-(1-&gt;3)-[alpha-D-Man-(1-&gt;3)-[alpha-D-Man-(1-&gt;2)-alpha-D-Man-(1-&gt;6)]-alpha-D-Man-(1-&gt;6)]-beta-D-Man-(1-&gt;4)-beta-D-GlcNAc-(1-&gt;4)-beta-D-GlcNAc)-L-asparaginyl-[protein] (N-glucan mannose isomer 8A1,2,3B1,3) + 3 H2O = N(4)-(alpha-D-Man-(1-&gt;3)-[alpha-D-Man-(1-&gt;3)-[alpha-D-Man-(1-&gt;6)]-alpha-D-Man-(1-&gt;6)]-beta-D-Man-(1-&gt;4)-beta-D-GlcNAc-(1-&gt;4)-beta-D-GlcNAc)-L-asparaginyl-[protein] (N-glucan mannose isomer 5A1,2) + 3 beta-D-mannose. It participates in protein modification; protein glycosylation. Involved in the maturation of Asn-linked oligosaccharides. Progressively trims alpha-1,2-linked mannose residues from Man(9)GlcNAc(2) to produce Man(5)GlcNAc(2). This is Mannosyl-oligosaccharide alpha-1,2-mannosidase 1B (mns1B) from Aspergillus phoenicis (Aspergillus saitoi).